The chain runs to 230 residues: Sugar fermentation stimulation protein homolog (230 aa).

It belongs to the SfsA family.

In Pyrococcus furiosus (strain ATCC 43587 / DSM 3638 / JCM 8422 / Vc1), this protein is Sugar fermentation stimulation protein homolog.